A 329-amino-acid chain; its full sequence is Cytosolic sulfotransferase 6 (329 aa).

74 to 79 contributes to the 3'-phosphoadenylyl sulfate binding site; the sequence is KCGTTW. Catalysis depends on histidine 140, which acts as the Proton acceptor. 3'-phosphoadenylyl sulfate-binding positions include arginine 162, serine 170, and 295–297; that span reads RKG.

Belongs to the sulfotransferase 1 family.

The protein resides in the cytoplasm. Sulfotransferase that utilizes 3'-phospho-5'-adenylyl sulfate (PAPS) as sulfonate donor. This chain is Cytosolic sulfotransferase 6 (SOT6), found in Arabidopsis thaliana (Mouse-ear cress).